Reading from the N-terminus, the 166-residue chain is Large ribosomal subunit protein uL11z (166 aa).

Belongs to the universal ribosomal protein uL11 family.

In terms of biological role, binds directly to 26S ribosomal RNA. This chain is Large ribosomal subunit protein uL11z (RPL12A), found in Arabidopsis thaliana (Mouse-ear cress).